Here is a 140-residue protein sequence, read N- to C-terminus: Large ribosomal subunit protein uL11 (140 aa).

This sequence belongs to the universal ribosomal protein uL11 family. As to quaternary structure, part of the ribosomal stalk of the 50S ribosomal subunit. Interacts with L10 and the large rRNA to form the base of the stalk. L10 forms an elongated spine to which L12 dimers bind in a sequential fashion forming a multimeric L10(L12)X complex. In terms of processing, one or more lysine residues are methylated.

In terms of biological role, forms part of the ribosomal stalk which helps the ribosome interact with GTP-bound translation factors. The sequence is that of Large ribosomal subunit protein uL11 from Oleidesulfovibrio alaskensis (strain ATCC BAA-1058 / DSM 17464 / G20) (Desulfovibrio alaskensis).